Here is a 585-residue protein sequence, read N- to C-terminus: tRNA-guanine(15) transglycosylase (585 aa).

Asp95 (nucleophile) is an active-site residue. 2 residues coordinate substrate: Asp130 and Ala196. Residues Cys279, Cys281, and Cys284 each contribute to the Zn(2+) site. In terms of domain architecture, PUA spans 507-582 (VMRVVVNKEA…RAVKTRRGVE (76 aa)).

It belongs to the archaeosine tRNA-ribosyltransferase family. Zn(2+) serves as cofactor.

It catalyses the reaction guanosine(15) in tRNA + 7-cyano-7-deazaguanine = 7-cyano-7-carbaguanosine(15) in tRNA + guanine. Its pathway is tRNA modification; archaeosine-tRNA biosynthesis. In terms of biological role, exchanges the guanine residue with 7-cyano-7-deazaguanine (preQ0) at position 15 in the dihydrouridine loop (D-loop) of archaeal tRNAs. The protein is tRNA-guanine(15) transglycosylase of Pyrococcus furiosus (strain ATCC 43587 / DSM 3638 / JCM 8422 / Vc1).